A 255-amino-acid polypeptide reads, in one-letter code: Cytochrome c oxidase subunit 2 (255 aa).

An N-terminal signal peptide occupies residues 1-16 (MFNLFPPFGANTAIFN). Residues 17 to 43 (DAPQPWQVGFQDGASPTQEGITELHDS) lie on the Mitochondrial intermembrane side of the membrane. Residues 44–64 (IFFYLVIICFGVLWVLSSVIV) traverse the membrane as a helical segment. Topologically, residues 65 to 80 (NFNSNKSQLVYKYANH) are mitochondrial matrix. The chain crosses the membrane as a helical span at residues 81–101 (GTLIELIWTITPALVLIAIAF). Residues 102 to 255 (PSFKLLYLMD…KYLAWIDSQA (154 aa)) lie on the Mitochondrial intermembrane side of the membrane. Cu cation is bound by residues His-189, Cys-224, Glu-226, Cys-228, His-232, and Met-235. Glu-226 provides a ligand contact to Mg(2+).

This sequence belongs to the cytochrome c oxidase subunit 2 family. As to quaternary structure, component of the cytochrome c oxidase (complex IV, CIV), a multisubunit enzyme composed of a catalytic core of 3 subunits and several supernumerary subunits. The complex exists as a monomer or a dimer and forms supercomplexes (SCs) in the inner mitochondrial membrane with ubiquinol-cytochrome c oxidoreductase (cytochrome b-c1 complex, complex III, CIII). Requires Cu cation as cofactor.

Its subcellular location is the mitochondrion inner membrane. It carries out the reaction 4 Fe(II)-[cytochrome c] + O2 + 8 H(+)(in) = 4 Fe(III)-[cytochrome c] + 2 H2O + 4 H(+)(out). Component of the cytochrome c oxidase, the last enzyme in the mitochondrial electron transport chain which drives oxidative phosphorylation. The respiratory chain contains 3 multisubunit complexes succinate dehydrogenase (complex II, CII), ubiquinol-cytochrome c oxidoreductase (cytochrome b-c1 complex, complex III, CIII) and cytochrome c oxidase (complex IV, CIV), that cooperate to transfer electrons derived from NADH and succinate to molecular oxygen, creating an electrochemical gradient over the inner membrane that drives transmembrane transport and the ATP synthase. Cytochrome c oxidase is the component of the respiratory chain that catalyzes the reduction of oxygen to water. Electrons originating from reduced cytochrome c in the intermembrane space (IMS) are transferred via the dinuclear copper A center (CU(A)) of subunit 2 and heme A of subunit 1 to the active site in subunit 1, a binuclear center (BNC) formed by heme A3 and copper B (CU(B)). The BNC reduces molecular oxygen to 2 water molecules using 4 electrons from cytochrome c in the IMS and 4 protons from the mitochondrial matrix. This is Cytochrome c oxidase subunit 2 (COX2) from Mycosarcoma maydis (Corn smut fungus).